Here is a 190-residue protein sequence, read N- to C-terminus: B3 domain-containing protein At4g01580 (190 aa).

Residues 1–25 (MVITRNMKARATSVSHRQSQQDPES) are disordered. A compositionally biased stretch (polar residues) spans 12–23 (TSVSHRQSQQDP). Positions 29–122 (KFFKLVLPST…SFRVIIFNAS (94 aa)) form a DNA-binding region, TF-B3.

It is found in the nucleus. In Arabidopsis thaliana (Mouse-ear cress), this protein is B3 domain-containing protein At4g01580.